The chain runs to 256 residues: Homeobox-leucine zipper protein HOX18 (256 aa).

A disordered region spans residues 52–116 (YDHGRDEEQA…GGGGGGTRKK (65 aa)). A compositionally biased stretch (gly residues) spans 102–112 (DGGSGGGGGGG). A DNA-binding region (homeobox) is located at residues 112-171 (GTRKKLQLTKEQSTLLEDSFRVHNILSHAQKHELARQLKLKPRQVEVWFQNRRARTKLKQ). The leucine-zipper stretch occupies residues 170–214 (KQTEVDCEFLKRCCESLTEENKQLKHELMELRRLASPAAAAAGSQ).

This sequence belongs to the HD-ZIP homeobox family. Class II subfamily. Expressed in roots, leaf sheaths and blades and panicles.

It is found in the nucleus. Functionally, probable transcription factor. The polypeptide is Homeobox-leucine zipper protein HOX18 (HOX18) (Oryza sativa subsp. japonica (Rice)).